Consider the following 314-residue polypeptide: MPASAPQNSTTFDSARFLDDYKKTADALGAPYNESIVARTLNSFGNCFNEGTVIWRSTSRPNDKLNYRFYLRDRVDTVALAIKAGYIEESHPMARLVTCWSNLFDGETVQWCDLDPEEGVAKTWIFMKTQRSIDNILDAAEVSDCVRAHRATFHSLGLKLVHFAAVDYHGGTLNIYFTVPGPISEAQAAAYTNLSGCKPPTPDEFADLRKYLPTQRFVFAATIDYTTGKIKRVAFYALNVPGSELPETMNDRLRKFFADAPSYDKQQTKNIAWSYGNGDSKYMKGLGEECEESRAGTFGPDVGGCESFLLLLRL.

The protein belongs to the aromatic prenyltransferase family.

In terms of biological role, prenyltransferase that attaches isoprenoid moieties to carbon atoms of aromatic substrates in an enzyme-catalyzed Friedel-Crafts reaction. In Arthroderma otae (strain ATCC MYA-4605 / CBS 113480) (Microsporum canis), this protein is Aromatic prenyltransferase.